A 267-amino-acid polypeptide reads, in one-letter code: MMLNTYKSYTERAEQHPNACARSLFELMERKKTNLSVAVDVTTKKELLSIADSVGPYVCVLKTHIDIVEDFDKDLVAQLEALAKKHDFLIFEDRKFADIGNTVKHQYEKGVYKIASWSHITNAHTVPGEGIIKGLGEVGLPLGRGLLLLAEMSSKGALTKGSYTTESVEMARRNKDFVFGFIAQHKMNEYPDEDFVVMTPGVGLDIKGDGLGQQYRTPHEVIVESGCDVIIVGRGIYGKPDEVEAQSKRYREAGWNAYLERVRMHKA.

Substrate-binding positions include Asp-40, 62 to 64 (KTH), 93 to 102 (DRKFADIGNT), Tyr-215, and Arg-234. Lys-95 (proton donor) is an active-site residue.

Belongs to the OMP decarboxylase family.

It carries out the reaction orotidine 5'-phosphate + H(+) = UMP + CO2. Its pathway is pyrimidine metabolism; UMP biosynthesis via de novo pathway; UMP from orotate: step 2/2. This chain is Orotidine 5'-phosphate decarboxylase (pyrG), found in Phycomyces blakesleeanus (strain ATCC 8743b / DSM 1359 / FGSC 10004 / NBRC 33097 / NRRL 1555).